The chain runs to 386 residues: MATTKSFLILFFMILATTSSTCAKLEEMVTVLSIDGGGIKGIIPAIILEFLEGQLQEVDNNKDARLADYFDVIGGTSTGGLLTAMITTPNENNRPFAAAKDIVPFYFEHGPHIFNYSGSIFGPRYDGKYLLQVLQEKLGETRVHQALTEVAISSFDIKTNKPVIFTKSNLAKSPELDAKMYDICYSIAAAPIYFPPHHFVTHTSNGATYEFNLVDGGVATVGDPALLSLSVATRLAQEDPAFSSIKSLDYKQMLLLSLGTGTNSEFDKTYTAEEAAKWGPLRWMLAIQQLTNAASSYMTDYYISTVFQARHSQNNYLRVQENALTGTTTEMDDASEANMELLVQVGETLLKKPVSKDSPETYEEALKRFAKLLSNRKKLRANKASY.

The first 23 residues, 1–23, serve as a signal peptide directing secretion; that stretch reads MATTKSFLILFFMILATTSSTCA. In terms of domain architecture, PNPLA spans 32-229; sequence LSIDGGGIKG…TVGDPALLSL (198 aa). The short motif at 36–41 is the GXGXXG element; it reads GGGIKG. Positions 75-79 match the GXSXG motif; that stretch reads GTSTG. The Nucleophile role is filled by Ser77. Asn115 carries an N-linked (GlcNAc...) asparagine glycan. The Proton acceptor role is filled by Asp215. Positions 215 to 217 match the DGA/G motif; sequence DGG.

This sequence belongs to the patatin family.

The protein resides in the vacuole. Its function is as follows. Probable lipolytic acyl hydrolase (LAH), an activity which is thought to be involved in the response of tubers to pathogens. The polypeptide is Patatin-B1 (PATB1) (Solanum tuberosum (Potato)).